The chain runs to 176 residues: MTAAPADFARARSEFLSIDAPRVEDGAAIWRIARDSQVLDLNSSYSYLLWCRDFAATSAVARGENGEPIAFVTGYVRPDRPQTLVVWQVAVDQAHRGKGLAAALLDALTARVAADQVLSSVETTITPDNTASDRLFTSYAQRHDVALEKEVLFDGELFPEETHLPEVLYRIGPFAT.

The N-acetyltransferase domain maps to Leu16–Ile171.

This sequence belongs to the acetyltransferase family. EctA subfamily.

The catalysed reaction is L-2,4-diaminobutanoate + acetyl-CoA = (2S)-4-acetamido-2-aminobutanoate + CoA + H(+). It participates in amine and polyamine biosynthesis; ectoine biosynthesis; L-ectoine from L-aspartate 4-semialdehyde: step 2/3. In terms of biological role, catalyzes the acetylation of L-2,4-diaminobutyrate (DABA) to gamma-N-acetyl-alpha,gamma-diaminobutyric acid (ADABA) with acetyl coenzyme A. This chain is L-2,4-diaminobutyric acid acetyltransferase (ectA), found in Streptomyces anulatus (Streptomyces chrysomallus).